A 163-amino-acid polypeptide reads, in one-letter code: ATP synthase subunit b 1 (163 aa).

Residues 7-27 (AETWVAIAFVILMGIFAYLGV) form a helical membrane-spanning segment.

The protein belongs to the ATPase B chain family. In terms of assembly, F-type ATPases have 2 components, F(1) - the catalytic core - and F(0) - the membrane proton channel. F(1) has five subunits: alpha(3), beta(3), gamma(1), delta(1), epsilon(1). F(0) has three main subunits: a(1), b(2) and c(10-14). The alpha and beta chains form an alternating ring which encloses part of the gamma chain. F(1) is attached to F(0) by a central stalk formed by the gamma and epsilon chains, while a peripheral stalk is formed by the delta and b chains.

It is found in the cell inner membrane. In terms of biological role, f(1)F(0) ATP synthase produces ATP from ADP in the presence of a proton or sodium gradient. F-type ATPases consist of two structural domains, F(1) containing the extramembraneous catalytic core and F(0) containing the membrane proton channel, linked together by a central stalk and a peripheral stalk. During catalysis, ATP synthesis in the catalytic domain of F(1) is coupled via a rotary mechanism of the central stalk subunits to proton translocation. Component of the F(0) channel, it forms part of the peripheral stalk, linking F(1) to F(0). The chain is ATP synthase subunit b 1 from Rhodopseudomonas palustris (strain HaA2).